The primary structure comprises 417 residues: Gamma-glutamyl phosphate reductase (417 aa).

The protein belongs to the gamma-glutamyl phosphate reductase family.

Its subcellular location is the cytoplasm. The catalysed reaction is L-glutamate 5-semialdehyde + phosphate + NADP(+) = L-glutamyl 5-phosphate + NADPH + H(+). It participates in amino-acid biosynthesis; L-proline biosynthesis; L-glutamate 5-semialdehyde from L-glutamate: step 2/2. Catalyzes the NADPH-dependent reduction of L-glutamate 5-phosphate into L-glutamate 5-semialdehyde and phosphate. The product spontaneously undergoes cyclization to form 1-pyrroline-5-carboxylate. In Serratia marcescens, this protein is Gamma-glutamyl phosphate reductase.